The sequence spans 147 residues: Hemoglobin subunit epsilon (147 aa).

The 145-residue stretch at 3 to 147 (HFTAEEKSTI…VATALAHKYH (145 aa)) folds into the Globin domain. 2 positions are modified to phosphoserine: Ser14 and Ser51. Heme b is bound by residues His64 and His93.

The protein belongs to the globin family. In terms of assembly, heterotetramer of two alpha chains and two epsilon chains in early embryonic hemoglobin Gower-2; two zeta chains and two epsilon chains in early embryonic hemoglobin Gower-1. Red blood cells.

Functionally, the epsilon chain is a beta-type chain of early mammalian embryonic hemoglobin. This Cheirogaleus medius (Fat-tailed dwarf lemur) protein is Hemoglobin subunit epsilon (HBE1).